We begin with the raw amino-acid sequence, 257 residues long: HTH-type transcriptional activator mta (257 aa).

An HTH merR-type domain is found at 2 to 71; that stretch reads KYQVKQVAEI…LDEIKEMLDH (70 aa). A DNA-binding region (H-T-H motif) is located at residues 5–24; it reads VKQVAEISGVSIRTLHHYDN. The segment at 71–74 is hinge; sequence HPNF. Positions 76-104 are essential for dimerization; that stretch reads RKAALQSQKEILMKKKQRMDEMIQTIDRT. A coiled-coil region spans residues 76–107; that stretch reads RKAALQSQKEILMKKKQRMDEMIQTIDRTLLS.

Homodimer.

The protein resides in the cytoplasm. Global transcriptional regulator that activates transcription of bmr and blt by binding directly to their promoter. Also stimulates the expression of the mta gene itself, ydfK and ymfE. The sequence is that of HTH-type transcriptional activator mta (mta) from Bacillus subtilis (strain 168).